A 623-amino-acid polypeptide reads, in one-letter code: Glutathione import ATP-binding protein GsiA (623 aa).

2 consecutive ABC transporter domains span residues 15–269 (VENL…RALL) and 314–564 (LRVR…RKLL). ATP is bound by residues 49 to 56 (GESGSGKS) and 357 to 364 (GESGSGKS).

Belongs to the ABC transporter superfamily. Glutathione importer (TC 3.A.1.5.11) family. In terms of assembly, the complex is composed of two ATP-binding proteins (GsiA), two transmembrane proteins (GsiC and GsiD) and a solute-binding protein (GsiB).

Its subcellular location is the cell inner membrane. The enzyme catalyses glutathione(out) + ATP + H2O = glutathione(in) + ADP + phosphate + H(+). Its function is as follows. Part of the ABC transporter complex GsiABCD involved in glutathione import. Responsible for energy coupling to the transport system. This Shigella flexneri serotype 5b (strain 8401) protein is Glutathione import ATP-binding protein GsiA.